The primary structure comprises 689 residues: MPREFPLERTRNIGIMAHIDAGKTTTTERILFYSGTTRKLGETHEGASQMDWMDQEKERGITITSAATTCQWLNHRVNIIDTPGHVDFTVEVERSLRVLDGAVAVFCAKGGVEPQSETVWRQGDKYKVPRMAFVNKMDRQGADFFNVMQMMIDRLAANPVAVQLPIGSEEEFTGIIDLVKMEATIYLDDVGQETKIVEIPEELKELAVEYREKLVEAVSETSEELMMKYLEGEALTEEELVKGIRQGTINVQITPVYCGSAYKNKGVQLLLDGVVAYMPSPLDIPAISGIDADTQEEIERHADDSEPFSALAFKIMADPYVGKLAFFRVYSGTLDAGSYVLNSTKGKKERIGRILQMHANTRAEIPTVYAGDIAAAVGLKDTTTGDTLCDPTDAVILESMVFPEPVISVAIEPKTKAGQEKMGVALQKLAEEDPTFKTYTDEETSQTIIAGMGELHLEIIVDRMMREFKVEATVGKPQVAYKETITKAVEVEAKYAKQSGGRGQYGHVKIRMIPQEPGIGYEFTNSTVGGSIPREYVPAVDQGIQGAMVNGILAGYEVVDFKVELYDGSYHDVDSSEMAFKIAGSMAFKEGMRKASPALLEPYMKVEVVTPEDYMGDVIGDLNSRRGQIEGMESRSGAQVIKAFVPLSEMFGYSTDLRSKTQGRATYSMHFNHYAQVPASISEKIMTGK.

A tr-type G domain is found at 8 to 282 (ERTRNIGIMA…GVVAYMPSPL (275 aa)). Residues 17–24 (AHIDAGKT), 81–85 (DTPGH), and 135–138 (NKMD) contribute to the GTP site.

The protein belongs to the TRAFAC class translation factor GTPase superfamily. Classic translation factor GTPase family. EF-G/EF-2 subfamily.

The protein resides in the cytoplasm. Catalyzes the GTP-dependent ribosomal translocation step during translation elongation. During this step, the ribosome changes from the pre-translocational (PRE) to the post-translocational (POST) state as the newly formed A-site-bound peptidyl-tRNA and P-site-bound deacylated tRNA move to the P and E sites, respectively. Catalyzes the coordinated movement of the two tRNA molecules, the mRNA and conformational changes in the ribosome. The sequence is that of Elongation factor G from Alkaliphilus metalliredigens (strain QYMF).